Consider the following 476-residue polypeptide: Probable cytosol aminopeptidase (476 aa).

Residues K242 and D247 each contribute to the Mn(2+) site. K254 is an active-site residue. 3 residues coordinate Mn(2+): D265, D324, and E326. The active site involves R328.

It belongs to the peptidase M17 family. It depends on Mn(2+) as a cofactor.

It is found in the cytoplasm. It carries out the reaction Release of an N-terminal amino acid, Xaa-|-Yaa-, in which Xaa is preferably Leu, but may be other amino acids including Pro although not Arg or Lys, and Yaa may be Pro. Amino acid amides and methyl esters are also readily hydrolyzed, but rates on arylamides are exceedingly low.. It catalyses the reaction Release of an N-terminal amino acid, preferentially leucine, but not glutamic or aspartic acids.. In terms of biological role, presumably involved in the processing and regular turnover of intracellular proteins. Catalyzes the removal of unsubstituted N-terminal amino acids from various peptides. The polypeptide is Probable cytosol aminopeptidase (Treponema denticola (strain ATCC 35405 / DSM 14222 / CIP 103919 / JCM 8153 / KCTC 15104)).